The chain runs to 484 residues: MSFRKVVRQSKFRHVFGQPVKNDQCYEDIRVSRVTWDSTFCAVNPKFLAVIVEASGGGAFMVLPLNKTGRIDKAYPTVCGHTGPVLDIDWCPHNDEVIASGSEDCTVMVWQIPENGLTSPLTEPVVVLEGHTKRVGIITWHPTARNVLLSAGCDNVVLIWNVGTAEELYRLDSLHPDLIYNVSWNHNGSLFCTACKDKSVRIIDPRRGTLVAEREKAHEGARPMRAIFLADGKVFTAGFSRMSERQLALWDPENFEEPMALQELDSSNGALLPFYDPDTSVVYVCGKGDSSIRYFEITDEPPYIHFLNTFTSKEPQRGMGSMPKRGLEVSKCEIARFYKLHERKCEPIVMTVPRKSDLFQDDLYPDTAGPDAALEAEDWVSGQDADPILISLREAYVPSKQRDLKVSRRNVLSDSKPAGYSRSGVSTATAITDIPSGNLAGSGEAGKLEEVMHGLRALRVLVKEQGERISRLEEHLGRMENGDT.

Phosphoserine is present on Ser-2. WD repeat units follow at residues 80-120 (GHTG…LTSP), 130-170 (GHTK…ELYR), 174-213 (LHPD…LVAE), 217-260 (AHEG…EPMA), and 265-305 (DSSN…PYIH). Residues 447-481 (KLEEVMHGLRALRVLVKEQGERISRLEEHLGRMEN) are a coiled coil.

This sequence belongs to the WD repeat coronin family. Forms homooligomers, but does not form complexes with the other coronins. Interacts with Arp2/3 complex components, including ACTR2, ARPC1B and ARPC2. Binds actin. In terms of processing, phosphorylation on Ser-2 regulates the interaction with the Arp2/3 complex and cell motility in fibroblasts. Phosphorylation does not seem to affect subcellular location.

Its subcellular location is the cytoplasm. The protein localises to the cytoskeleton. The protein resides in the stress fiber. In terms of biological role, regulates leading edge dynamics and cell motility in fibroblasts. May be involved in cytokinesis and signal transduction. The polypeptide is Coronin-1B (Coro1b) (Rattus norvegicus (Rat)).